The sequence spans 122 residues: Large ribosomal subunit protein bL12 (122 aa).

Belongs to the bacterial ribosomal protein bL12 family. As to quaternary structure, homodimer. Part of the ribosomal stalk of the 50S ribosomal subunit. Forms a multimeric L10(L12)X complex, where L10 forms an elongated spine to which 2 to 4 L12 dimers bind in a sequential fashion. Binds GTP-bound translation factors.

Forms part of the ribosomal stalk which helps the ribosome interact with GTP-bound translation factors. Is thus essential for accurate translation. This chain is Large ribosomal subunit protein bL12, found in Cronobacter sakazakii (strain ATCC BAA-894) (Enterobacter sakazakii).